The following is a 360-amino-acid chain: MAGHLASDFAFSPPPGGGGDGPGGPEPGWVDPRTWLSFQGPPGGSGIGPGVGPGAEVWGLPACPPPYDFCGGMAYCAPQVGVGLVPQGGLETPQPEGEAGAGVESNSEGASPEPCAAPAGAAKLDKEKLEPNPEESQDIKALQKDLEQFAKLLKQKRITLGYTQADVGLTLGVLFGKVFSQTTICRFEALQLSFKNMCKLRPLLQKWVEEADNNENLQEICKAETLVQARKRKRTSIENRVRGNLESMFLQCPKPTLQQISHIAQQLGLEKDVVRVWFCNRRQKGKRSSSDYSQREDFEAAGSPFPGGPVSFPLAPGPHFGTPGYGGPHFTTLYSSVPFPEGEAFPSVSVTPLGSPMHSN.

Disordered stretches follow at residues Met-1 to Gly-50 and Gln-87 to Pro-118. Residues His-4–Ser-12 carry the 9aaTAD motif. The span at Pro-41 to Gly-50 shows a compositional bias: gly residues. Position 111 is a phosphoserine; by MAPK (Ser-111). A Glycyl lysine isopeptide (Lys-Gly) (interchain with G-Cter in SUMO) cross-link involves residue Lys-123. The POU-specific domain maps to Asp-138–Asp-212. Residues Arg-157 and Gln-164 each contribute to the DNA site. DNA-binding regions lie at residues Ser-180 to Arg-186 and Ser-193 to Asn-196. The homeobox DNA-binding region spans Arg-230 to Ser-289. The residue at position 235 (Thr-235) is a Phosphothreonine. 3 positions are modified to phosphoserine: Ser-236, Ser-289, and Ser-290. A disordered region spans residues Arg-287–Pro-316. The segment covering Gly-302–Pro-313 has biased composition (low complexity). Ser-355 is subject to Phosphoserine.

This sequence belongs to the POU transcription factor family. Class-5 subfamily. As to quaternary structure, interacts with PKM. Interacts with WWP2. Interacts with UBE2I and ZSCAN10. Interacts with PCGF1. Interacts with ESRRB; recruits ESRRB near the POU5F1-SOX2 element in the NANOG proximal promoter; the interaction is DNA independent. Interacts with ZNF322. Interacts with MAPK8 and MAPK9; the interaction allows MAPK8 and MAPK9 to phosphorylate POU5F1 on Ser-355. Interacts (when phosphorylated on Ser-355) with FBXW8. Interacts with FBXW4. Interacts with SOX2 and SOX15; binds synergistically with either SOX2 or SOX15 to DNA. Interacts with DDX56. Post-translationally, sumoylation enhances the protein stability, DNA binding and transactivation activity. Sumoylation is required for enhanced YES1 expression. Ubiquitinated; undergoes 'Lys-63'-linked polyubiquitination by WWP2 leading to proteasomal degradation. In terms of processing, ERK1/2-mediated phosphorylation at Ser-111 promotes nuclear exclusion and proteasomal degradation. Phosphorylation at Thr-235 and Ser-236 decrease DNA-binding and alters ability to activate transcription.

The protein resides in the cytoplasm. It is found in the nucleus. In terms of biological role, transcription factor that binds to the octamer motif (5'-ATTTGCAT-3'). Forms a trimeric complex with SOX2 or SOX15 on DNA and controls the expression of a number of genes involved in embryonic development such as YES1, FGF4, UTF1 and ZFP206. Critical for early embryogenesis and for embryonic stem cell pluripotency. The polypeptide is POU domain, class 5, transcription factor 1 (POU5F1) (Sus scrofa (Pig)).